We begin with the raw amino-acid sequence, 1099 residues long: Transmembrane protein 132C (1099 aa).

Positions 1-31 are cleaved as a signal peptide; the sequence is MRSEGAAPRRAARYGALSLVLATLLGQVTES. Residues 32-915 lie on the Extracellular side of the membrane; that stretch reads RGVMDNIQRF…LMQTAHGLSD (884 aa). Residue asparagine 95 is glycosylated (N-linked (GlcNAc...) asparagine). A disordered region spans residues 237-260; sequence GDCTGGDTRKDNAIRPGKDGQEGR. Residues asparagine 314 and asparagine 371 are each glycosylated (N-linked (GlcNAc...) asparagine). A disordered region spans residues 801-872; that stretch reads DADSSQTGEK…NNVGKSGRRD (72 aa). A compositionally biased stretch (basic and acidic residues) spans 813–849; that stretch reads EEIKNHASDRRQKIQDLERPGQDELYHGNFPGDREEG. The helical transmembrane segment at 916–936 threads the bilayer; the sequence is LEIGMYALLGVFCLAILVFLI. At 937 to 1099 the chain is on the cytoplasmic side; it reads NCATFAFKYR…TYLEKFQDSV (163 aa). A disordered region spans residues 1002-1045; sequence NHLLLNGGSQKPTQSQVHRPPGSGGRQTREPRQEPANSPTSKMK. The segment covering 1008–1018 has biased composition (polar residues); the sequence is GGSQKPTQSQV.

Belongs to the TMEM132 family.

The protein localises to the membrane. In Mus musculus (Mouse), this protein is Transmembrane protein 132C (Tmem132c).